Reading from the N-terminus, the 21-residue chain is Thioredoxin (21 aa).

An N6-acetyllysine modification is found at Lys3. Lys8 bears the N6-succinyllysine mark.

Belongs to the thioredoxin family. In terms of assembly, homodimer; disulfide-linked. Interacts with TXNIP through the redox-active site. Interacts with MAP3K5 and CASP3. Interacts with APEX1; the interaction stimulates the FOS/JUN AP-1 DNA-binding activity in a redox-dependent manner.

The protein localises to the nucleus. It localises to the cytoplasm. It is found in the secreted. Its function is as follows. Participates in various redox reactions through the reversible oxidation of its active center dithiol to a disulfide and catalyzes dithiol-disulfide exchange reactions. Plays a role in the reversible S-nitrosylation of cysteine residues in target proteins, and thereby contributes to the response to intracellular nitric oxide. Nitrosylates the active site Cys of CASP3 in response to nitric oxide (NO), and thereby inhibits caspase-3 activity. Induces the FOS/JUN AP-1 DNA binding activity in ionizing radiation (IR) cells through its oxidation/reduction status and stimulates AP-1 transcriptional activity. This is Thioredoxin (TXN) from Canis lupus familiaris (Dog).